The chain runs to 348 residues: Rhodopsin (348 aa).

Met-1 is modified (N-acetylmethionine). The Extracellular portion of the chain corresponds to 1–36 (MNGTEGPNFYVPFSNKTGVVRSPFEYPQYYLAEPWQ). Asn-2 and Asn-15 each carry an N-linked (GlcNAc...) asparagine glycan. The helical transmembrane segment at 37–61 (FSMLAAYMFLLIVLGFPINFLTLYV) threads the bilayer. The Cytoplasmic segment spans residues 62-73 (TVQHKKLRTPLN). The helical transmembrane segment at 74-96 (YILLNLAVADLFMVFGGFTTTLY) threads the bilayer. At 97–110 (TSLHGYFVFGPTGC) the chain is on the extracellular side. Cys-110 and Cys-187 are disulfide-bonded. The chain crosses the membrane as a helical span at residues 111–133 (NLEGFFATLGGEIALWSLVVLAI). The 'Ionic lock' involved in activated form stabilization signature appears at 134-136 (ERY). Over 134 to 152 (ERYVVVCKPMSNFRFGENH) the chain is Cytoplasmic. A helical membrane pass occupies residues 153 to 173 (AIMGVAFTWVMALACAAPPLV). Residues 174 to 202 (GWSRYIPEGMQCSCGIDYYTLKPEVNNES) lie on the Extracellular side of the membrane. Glu-201 serves as a coordination point for Zn(2+). A helical transmembrane segment spans residues 203-224 (FVIYMFVVHFTIPMIVIFFCYG). Residues 225–252 (QLVFTVKEAAAQQQESATTQKAEKEVTR) are Cytoplasmic-facing. The helical transmembrane segment at 253 to 274 (MVIIMVIAFLICWVPYASVAFY) threads the bilayer. The Extracellular portion of the chain corresponds to 275 to 286 (IFTHQGSNFGPI). Gln-279 serves as a coordination point for Zn(2+). A helical membrane pass occupies residues 287 to 308 (FMTLPAFFAKSSSIYNPVIYIM). Lys-296 is modified (N6-(retinylidene)lysine). Topologically, residues 309 to 348 (MNKQFRNCMLTTLCCGKNPLGDDEASTTGSKTETSQVAPA) are cytoplasmic. 2 S-palmitoyl cysteine lipidation sites follow: Cys-322 and Cys-323. The tract at residues 330–348 (DDEASTTGSKTETSQVAPA) is interaction with SAG. At Ser-334 the chain carries Phosphoserine. Thr-335 and Thr-336 each carry phosphothreonine. Position 338 is a phosphoserine (Ser-338). Residues Thr-340 and Thr-342 each carry the phosphothreonine modification. Position 343 is a phosphoserine (Ser-343).

The protein belongs to the G-protein coupled receptor 1 family. Opsin subfamily. In terms of assembly, homodimer. May form a complex composed of RHO, GRK1 and RCVRN in a Ca(2+)-dependent manner; RCVRN prevents the interaction between GRK1 and RHO. Interacts with GRK1. Interacts (phosphorylated form) with SAG. Interacts with GNAT1. Interacts with GNAT3. SAG and G-proteins compete for a common binding site. Interacts with PRCD; the interaction promotes PRCD stability. Forms a complex with ASAP1 and ARF4. Forms a complex with ASAP1, RAB11A, Rabin8/RAB3IP, ARF4 and RAB11FIP3; the complex regulates Golgi-to-cilia rhodopsin/RHO transport in photoreceptors. In terms of processing, phosphorylated on some or all of the serine and threonine residues present in the C-terminal region. Contains one covalently linked retinal chromophore. Upon light absorption, the covalently bound 11-cis-retinal is converted to all-trans-retinal. After hydrolysis of the Schiff base and release of the covalently bound all-trans-retinal, active rhodopsin is regenerated by binding of a fresh molecule of 11-cis-retinal.

It is found in the membrane. The protein localises to the cell projection. The protein resides in the cilium. Its subcellular location is the photoreceptor outer segment. Functionally, photoreceptor required for image-forming vision at low light intensity. Required for photoreceptor cell viability after birth. Light-induced isomerization of 11-cis to all-trans retinal triggers a conformational change that activates signaling via G-proteins. Subsequent receptor phosphorylation mediates displacement of the bound G-protein alpha subunit by the arrestin SAG and terminates signaling. This chain is Rhodopsin (RHO), found in Felis catus (Cat).